The sequence spans 350 residues: Spermidine/putrescine import ATP-binding protein PotA (350 aa).

The ABC transporter domain occupies 6-236 (LELRNVTKDY…PENLWVAKFI (231 aa)). An ATP-binding site is contributed by 38–45 (GPSGCGKT).

It belongs to the ABC transporter superfamily. Spermidine/putrescine importer (TC 3.A.1.11.1) family. The complex is composed of two ATP-binding proteins (PotA), two transmembrane proteins (PotB and PotC) and a solute-binding protein (PotD).

The protein resides in the cell membrane. The enzyme catalyses ATP + H2O + polyamine-[polyamine-binding protein]Side 1 = ADP + phosphate + polyamineSide 2 + [polyamine-binding protein]Side 1.. In terms of biological role, part of the ABC transporter complex PotABCD involved in spermidine/putrescine import. Responsible for energy coupling to the transport system. This chain is Spermidine/putrescine import ATP-binding protein PotA, found in Mesoplasma florum (strain ATCC 33453 / NBRC 100688 / NCTC 11704 / L1) (Acholeplasma florum).